Reading from the N-terminus, the 316-residue chain is Ribose-phosphate pyrophosphokinase (316 aa).

Residues Asp-39 to Glu-41 and Arg-98 to Gln-99 contribute to the ATP site. Mg(2+) contacts are provided by His-133 and Asp-172. The active site involves Lys-195. D-ribose 5-phosphate is bound by residues Arg-197, Asp-221, and Asp-225 to Thr-229.

This sequence belongs to the ribose-phosphate pyrophosphokinase family. Class I subfamily. In terms of assembly, homohexamer. Mg(2+) is required as a cofactor.

The protein resides in the cytoplasm. The catalysed reaction is D-ribose 5-phosphate + ATP = 5-phospho-alpha-D-ribose 1-diphosphate + AMP + H(+). It functions in the pathway metabolic intermediate biosynthesis; 5-phospho-alpha-D-ribose 1-diphosphate biosynthesis; 5-phospho-alpha-D-ribose 1-diphosphate from D-ribose 5-phosphate (route I): step 1/1. Involved in the biosynthesis of the central metabolite phospho-alpha-D-ribosyl-1-pyrophosphate (PRPP) via the transfer of pyrophosphoryl group from ATP to 1-hydroxyl of ribose-5-phosphate (Rib-5-P). This is Ribose-phosphate pyrophosphokinase from Nitrosomonas europaea (strain ATCC 19718 / CIP 103999 / KCTC 2705 / NBRC 14298).